We begin with the raw amino-acid sequence, 435 residues long: UPF0053 protein Rv2366c (435 aa).

One can recognise a CNNM transmembrane domain in the interval 1 to 185 (MTGYYQLLGS…QQRGVVAADE (185 aa)). 2 helical membrane passes run 7–27 (LLGS…DAAI) and 89–109 (VWGL…VVGV). CBS domains lie at 204 to 267 (MVPR…GRET) and 272 to 329 (VMRP…IADE).

The protein belongs to the UPF0053 family.

The protein localises to the cell membrane. The chain is UPF0053 protein Rv2366c from Mycobacterium tuberculosis (strain ATCC 25618 / H37Rv).